The sequence spans 364 residues: Caffeic acid 3-O-methyltransferase 3 (364 aa).

Residue 129–135 coordinates substrate; the sequence is MNQDKVL. The interval 161 to 179 is substrate binding; the sequence is AFEYHGTDPRFNKVFNKGM. 5 residues coordinate S-adenosyl-L-methionine: Gly207, Asp230, Asp250, Met251, and Lys264. The Proton acceptor role is filled by His268.

The protein belongs to the class I-like SAM-binding methyltransferase superfamily. Cation-independent O-methyltransferase family. COMT subfamily. As to quaternary structure, homodimer.

It catalyses the reaction (E)-caffeate + S-adenosyl-L-methionine = (E)-ferulate + S-adenosyl-L-homocysteine + H(+). It functions in the pathway aromatic compound metabolism; phenylpropanoid biosynthesis. Its function is as follows. Catalyzes the conversion of caffeic acid to ferulic acid and of 5-hydroxyferulic acid to sinapic acid. The resulting products may subsequently be converted to the corresponding alcohols that are incorporated into lignins. This is Caffeic acid 3-O-methyltransferase 3 (HOMT3) from Populus kitakamiensis (Aspen).